We begin with the raw amino-acid sequence, 1137 residues long: MSSSRSNNRATCSRSSSARSKHSARVVAQTPMDAQLHAEFEGSQRHFDYSSSVGAANRSGATTSNVSAYLQNMQRGRFVQPFGCLLAVHPETFALLAYSENAAEMLDLTPHAVPTIDQREALAVGTDVRTLFRSHSFVALQKAATFGDVNLLNPILVHARTSGKPFYAIMHRIDVGLVIDLEPVNPVDLPVTATGAIKSYKLAARAIARLQSLPSGNLSLLCDVLVREVSELTGYDRVMAYKFHEDEHGEVIAECKRSDLEPYLGLHYPATDIPQASRFLFMKNKVRMICDCSATPVKIIQDDSLTQPISICGSTLRAPHGCHAQYMASMGSVASLVMSVTINEDEDDDGDTGSDQQPKGRKLWGLMVCHHTSPRFVPFPLRYACEFLLQVFGIQINKEVELAAQAKERHILRTQTLLCDMLLRDAPVGIFTQSPNVMDLVKCDGAALYYQNQLWVLGSTPSEAEIKNIVAWLQEYHDGSTGLSTDSLVEAGYPGAAALGDVVCGMAAIKISSKDFIFWFRSHTAKEIKWGGAKHEPIDADDNGRKMHPRSSFKAFLEVVKWRSVPWEDVEMDAIHSLQLILRGSLQDEDANKNNNAKSIVTAPSDDMKKIQGLLELRTVTNEMVRLIETATAPILAVDITGSINGWNNKAAELTGLPVMEAIGKPLVDLVIDDSVEVVKQILNSALQGIEEQNLQIKLKTFNHQENNGPVILMVNACCSRDLSEKVVGVCFVAQDMTGQNIIMDKYTRIQGDYVAIVKNPSELIPPIFMINDLGSCLEWNEAMQKITGIKREDAVDKLLIGEVFTHHEYGCRVKDHGTLTKLSILMNTVISGQDPEKLLFGFFNTDGKYIESLMTATKRTDAEGKITGALCFLHVASPELQHALQVQKMSEQAAMNSFKELTYIRQELRNPLNGMQFTRNLLEPSDLTEEQRKLLASNVLCQEQLKKILHDTDLESIEQCYTEMSTVDFNLEEALNTVLMQAMPQSKEKQISIDRDWPAEVSCMHLCGDNLRLQQVLADFLACMLQFTQPAEGPIVLQVIPRMENIGSGMQIAHLEFRLVHPAPGVPEALIQEMFRHSPGASREGLGLYISQKLVKTMSGTVQYLRESESSSFIVLVEFPVAQLSTKRCKASTSKF.

Residues 1–18 (MSSSRSNNRATCSRSSSA) are compositionally biased toward low complexity. Positions 1–27 (MSSSRSNNRATCSRSSSARSKHSARVV) are disordered. A GAF domain is found at 217 to 400 (NLSLLCDVLV…VFGIQINKEV (184 aa)). Phytochromobilin is bound at residue Cys322. 2 consecutive PAS domains span residues 620–690 (VTNE…LQGI) and 750–824 (IQGD…TKLS). The 221-residue stretch at 904–1124 (YIRQELRNPL…IVLVEFPVAQ (221 aa)) folds into the Histidine kinase domain.

The protein belongs to the phytochrome family. As to quaternary structure, homodimer. Post-translationally, contains one covalently linked phytochromobilin chromophore.

Regulatory photoreceptor which exists in two forms that are reversibly interconvertible by light: the Pr form that absorbs maximally in the red region of the spectrum and the Pfr form that absorbs maximally in the far-red region. Photoconversion of Pr to Pfr induces an array of morphogenic responses, whereas reconversion of Pfr to Pr cancels the induction of those responses. Pfr controls the expression of a number of nuclear genes including those encoding the small subunit of ribulose-bisphosphate carboxylase, chlorophyll A/B binding protein, protochlorophyllide reductase, rRNA, etc. It also controls the expression of its own gene(s) in a negative feedback fashion. The sequence is that of Phytochrome C (PHYC) from Oryza sativa subsp. japonica (Rice).